The following is an 80-amino-acid chain: Defensin-like protein 16 (80 aa).

The signal sequence occupies residues 1–29; it reads MAKFASIITLIFAALVLFAAFDAPAMVEA. Glutamine 30 carries the pyrrolidone carboxylic acid modification. Disulfide bonds link cysteine 33-cysteine 80, cysteine 44-cysteine 65, cysteine 50-cysteine 74, and cysteine 54-cysteine 76.

The protein belongs to the DEFL family. In terms of tissue distribution, predominantly expressed in leaves.

The protein resides in the secreted. Its function is as follows. Confers broad-spectrum resistance to pathogens. Has antifungal activity in vitro. The polypeptide is Defensin-like protein 16 (PDF1.2A) (Arabidopsis thaliana (Mouse-ear cress)).